Consider the following 206-residue polypeptide: ATP phosphoribosyltransferase (206 aa).

The protein belongs to the ATP phosphoribosyltransferase family. Short subfamily. Heteromultimer composed of HisG and HisZ subunits.

Its subcellular location is the cytoplasm. The enzyme catalyses 1-(5-phospho-beta-D-ribosyl)-ATP + diphosphate = 5-phospho-alpha-D-ribose 1-diphosphate + ATP. It participates in amino-acid biosynthesis; L-histidine biosynthesis; L-histidine from 5-phospho-alpha-D-ribose 1-diphosphate: step 1/9. Functionally, catalyzes the condensation of ATP and 5-phosphoribose 1-diphosphate to form N'-(5'-phosphoribosyl)-ATP (PR-ATP). Has a crucial role in the pathway because the rate of histidine biosynthesis seems to be controlled primarily by regulation of HisG enzymatic activity. This Geobacillus sp. (strain WCH70) protein is ATP phosphoribosyltransferase.